A 563-amino-acid chain; its full sequence is Arginine--tRNA ligase (563 aa).

The short motif at 122–132 (PNIAKPMSMGH) is the 'HIGH' region element.

It belongs to the class-I aminoacyl-tRNA synthetase family. Monomer.

It is found in the cytoplasm. The enzyme catalyses tRNA(Arg) + L-arginine + ATP = L-arginyl-tRNA(Arg) + AMP + diphosphate. This chain is Arginine--tRNA ligase, found in Ligilactobacillus salivarius (strain UCC118) (Lactobacillus salivarius).